Consider the following 782-residue polypeptide: E3 UFM1-protein ligase 1 homolog (782 aa).

Residues 404-477 (NASTQELEDD…GSRGGGGVNK (74 aa)) are disordered. A compositionally biased stretch (basic residues) spans 443 to 453 (KSTKKHQRGKA).

It belongs to the UFL1 family.

In terms of biological role, E3 UFM1-protein ligase that mediates ufmylation of target proteins. The chain is E3 UFM1-protein ligase 1 homolog from Drosophila erecta (Fruit fly).